The primary structure comprises 404 residues: POU domain, class 2, transcription factor 3L (404 aa).

2 disordered regions span residues methionine 1–phenylalanine 29 and threonine 44–glutamate 67. Positions glycine 16–phenylalanine 29 are enriched in basic and acidic residues. Positions glutamine 187–glutamate 235 constitute a POU-specific domain. Residues lysine 259–valine 297 constitute a DNA-binding region (homeobox). A disordered region spans residues methionine 346–leucine 367. Low complexity predominate over residues serine 350–proline 363.

The protein belongs to the POU transcription factor family. Class-2 subfamily.

It localises to the nucleus. Functionally, transcription factor that binds to the octamer motif (5'-ATTTGCAT-3') and regulates cell type-specific differentiation pathways. The chain is POU domain, class 2, transcription factor 3L (pou2f3.L) from Xenopus laevis (African clawed frog).